The following is a 94-amino-acid chain: DNA-directed RNA polymerase subunit Rpo11 (94 aa).

The protein belongs to the archaeal Rpo11/eukaryotic RPB11/RPC19 RNA polymerase subunit family. In terms of assembly, part of the RNA polymerase complex.

The protein localises to the cytoplasm. It carries out the reaction RNA(n) + a ribonucleoside 5'-triphosphate = RNA(n+1) + diphosphate. DNA-dependent RNA polymerase (RNAP) catalyzes the transcription of DNA into RNA using the four ribonucleoside triphosphates as substrates. The protein is DNA-directed RNA polymerase subunit Rpo11 of Halobacterium salinarum (strain ATCC 700922 / JCM 11081 / NRC-1) (Halobacterium halobium).